We begin with the raw amino-acid sequence, 355 residues long: UDP-N-acetylglucosamine--N-acetylmuramyl-(pentapeptide) pyrophosphoryl-undecaprenol N-acetylglucosamine transferase (355 aa).

UDP-N-acetyl-alpha-D-glucosamine contacts are provided by residues 15–17 (TGG), Asn127, Arg163, Ser191, Ile244, 263–268 (ALTVSE), and Gln288.

The protein belongs to the glycosyltransferase 28 family. MurG subfamily.

It localises to the cell inner membrane. The enzyme catalyses di-trans,octa-cis-undecaprenyl diphospho-N-acetyl-alpha-D-muramoyl-L-alanyl-D-glutamyl-meso-2,6-diaminopimeloyl-D-alanyl-D-alanine + UDP-N-acetyl-alpha-D-glucosamine = di-trans,octa-cis-undecaprenyl diphospho-[N-acetyl-alpha-D-glucosaminyl-(1-&gt;4)]-N-acetyl-alpha-D-muramoyl-L-alanyl-D-glutamyl-meso-2,6-diaminopimeloyl-D-alanyl-D-alanine + UDP + H(+). The protein operates within cell wall biogenesis; peptidoglycan biosynthesis. Its function is as follows. Cell wall formation. Catalyzes the transfer of a GlcNAc subunit on undecaprenyl-pyrophosphoryl-MurNAc-pentapeptide (lipid intermediate I) to form undecaprenyl-pyrophosphoryl-MurNAc-(pentapeptide)GlcNAc (lipid intermediate II). This chain is UDP-N-acetylglucosamine--N-acetylmuramyl-(pentapeptide) pyrophosphoryl-undecaprenol N-acetylglucosamine transferase, found in Salmonella enteritidis PT4 (strain P125109).